We begin with the raw amino-acid sequence, 488 residues long: Ribulose bisphosphate carboxylase large chain (488 aa).

Residues Asn-127 and Thr-177 each coordinate substrate. Lys-179 (proton acceptor) is an active-site residue. Residue Lys-181 participates in substrate binding. Lys-205, Asp-207, and Glu-208 together coordinate Mg(2+). The residue at position 205 (Lys-205) is an N6-carboxylysine. His-297 acts as the Proton acceptor in catalysis. Arg-298, His-330, and Ser-382 together coordinate substrate.

The protein belongs to the RuBisCO large chain family. Type I subfamily. In terms of assembly, heterohexadecamer of 8 large chains and 8 small chains. The cofactor is Mg(2+).

Its subcellular location is the plastid. It localises to the chloroplast. The enzyme catalyses 2 (2R)-3-phosphoglycerate + 2 H(+) = D-ribulose 1,5-bisphosphate + CO2 + H2O. It catalyses the reaction D-ribulose 1,5-bisphosphate + O2 = 2-phosphoglycolate + (2R)-3-phosphoglycerate + 2 H(+). Its function is as follows. RuBisCO catalyzes two reactions: the carboxylation of D-ribulose 1,5-bisphosphate, the primary event in carbon dioxide fixation, as well as the oxidative fragmentation of the pentose substrate in the photorespiration process. Both reactions occur simultaneously and in competition at the same active site. The chain is Ribulose bisphosphate carboxylase large chain from Olisthodiscus luteus (Marine phytoflagellate).